Here is a 681-residue protein sequence, read N- to C-terminus: Secretion system apparatus protein SsaV (681 aa).

7 helical membrane-spanning segments follow: residues 24–44 (MVLA…LPTW), 48–68 (ILIT…IYLS), 73–93 (LSVF…LTIS), 118–138 (GNLT…FIVI), 206–226 (TIAG…IAIV), 244–264 (IGDG…AGII), and 295–315 (AVVL…LAFF).

This sequence belongs to the FHIPEP (flagella/HR/invasion proteins export pore) family.

The protein localises to the cell inner membrane. Its function is as follows. Component of Salmonella pathogenicity island 2 (SPI-2) type III secretion system, required for secretion of some type III-secreted effectors including the SpvB exotoxin. This Salmonella typhimurium (strain 14028s / SGSC 2262) protein is Secretion system apparatus protein SsaV (ssaV).